The primary structure comprises 494 residues: Lysine--tRNA ligase (494 aa).

Mg(2+) contacts are provided by E405 and E412.

Belongs to the class-II aminoacyl-tRNA synthetase family. Homodimer. It depends on Mg(2+) as a cofactor.

Its subcellular location is the cytoplasm. The enzyme catalyses tRNA(Lys) + L-lysine + ATP = L-lysyl-tRNA(Lys) + AMP + diphosphate. The chain is Lysine--tRNA ligase (lysS) from Geobacillus stearothermophilus (Bacillus stearothermophilus).